Consider the following 103-residue polypeptide: Carboxysome shell protein CsoS1 (103 aa).

The 86-residue stretch at 9 to 94 folds into the BMC domain; it reads ALGMIETRGL…PHREVEPALG (86 aa).

Belongs to the bacterial microcompartments protein family. CsoS1 subfamily. Homohexamer with a small central pore. Forms a CsoS2-CsoS1-RuBisCO complex.

Its subcellular location is the carboxysome. One of the shell proteins of the carboxysome, a polyhedral inclusion where RuBisCO (ribulose bisphosphate carboxylase, ccbL-ccbS) is sequestered. Assembles into hexamers which make sheets that form the facets of the polyhedral carboxysome. This is Carboxysome shell protein CsoS1 from Prochlorococcus marinus (strain MIT 9313).